The following is a 297-amino-acid chain: MEINGVEIEDTYAEAFPIKIARVLITAATKRWAQVAATEATGFATSVIMCPAEAGIEKFASPSETPDGRPGVYVQICTFKYEALEEQLLERIGQCVLTAPTTAVFNGLPDAEKQFNIGFKLKFFGDGMESEAQVAGRKVYKVPIMEGDFVTEENIGAIAGIAGGNFFIFGDSQMSALTAAEAAVDAIEELEGTIAPFPGGIVASGSKSGANKYKFLKATANEKFCPSIKDKVENTEVPADVNAIYEIVINGLDEASIKAAMKAGIEAAVTVPGIKKISAGNYGGKLGKYQFKLHELF.

It belongs to the FTR family. Homotetramer.

The protein resides in the cytoplasm. It catalyses the reaction N-formylmethanofuran + 5,6,7,8-tetrahydromethanopterin + H(+) = N(5)-formyl-5,6,7,8-tetrahydromethanopterin + methanofuran. Its pathway is one-carbon metabolism; methanogenesis from CO(2); 5,10-methenyl-5,6,7,8-tetrahydromethanopterin from CO(2): step 2/3. Functionally, catalyzes the reversible transfer of a formyl group from formylmethanofuran (formyl-MFR) to tetrahydromethanopterin (H(4)MPT) to produce 5-formyl tetrahydromethanopterin (5-formyl-H(4)MPT) and methanofuran (MFR). This Methanosarcina acetivorans (strain ATCC 35395 / DSM 2834 / JCM 12185 / C2A) protein is Formylmethanofuran--tetrahydromethanopterin formyltransferase.